A 310-amino-acid polypeptide reads, in one-letter code: Oxygen-dependent coproporphyrinogen-III oxidase (310 aa).

Ser97 lines the substrate pocket. The a divalent metal cation site is built by His101 and His111. The active-site Proton donor is the His111. Substrate is bound at residue 113–115; the sequence is NFR. Residues His150 and His180 each coordinate a divalent metal cation. Positions 245 to 280 are important for dimerization; the sequence is YVEFNLLYDRGTRFGLEFGGRTESILMSLPPRVVWR. A substrate-binding site is contributed by 263 to 265; the sequence is GGR.

It belongs to the aerobic coproporphyrinogen-III oxidase family. In terms of assembly, homodimer. A divalent metal cation serves as cofactor.

Its subcellular location is the cytoplasm. The enzyme catalyses coproporphyrinogen III + O2 + 2 H(+) = protoporphyrinogen IX + 2 CO2 + 2 H2O. It participates in porphyrin-containing compound metabolism; protoporphyrin-IX biosynthesis; protoporphyrinogen-IX from coproporphyrinogen-III (O2 route): step 1/1. Its function is as follows. Involved in the heme biosynthesis. Catalyzes the aerobic oxidative decarboxylation of propionate groups of rings A and B of coproporphyrinogen-III to yield the vinyl groups in protoporphyrinogen-IX. This chain is Oxygen-dependent coproporphyrinogen-III oxidase, found in Coxiella burnetii (strain RSA 493 / Nine Mile phase I).